Here is a 617-residue protein sequence, read N- to C-terminus: Urocanate reductase (617 aa).

FMN phosphoryl threonine is present on Thr70. Residues Ala124, Glu143, Asn151, Thr152, Gly156, Gly157, and Asp387 each coordinate FAD. Catalysis depends on Arg446, which acts as the Proton donor. Residues His553, Glu582, and Leu598 each contribute to the FAD site.

The protein belongs to the FAD-dependent oxidoreductase 2 family. FRD/SDH subfamily. FAD is required as a cofactor. The cofactor is FMN.

The enzyme catalyses dihydrourocanate + A = urocanate + AH2. Functionally, catalyzes the two-electron reduction of urocanate to dihydrourocanate (also named imidazole propionate or deamino-histidine). Dihydrourocanate is present at higher concentrations in subjects with type 2 diabetes, and directly impairs glucose tolerance and insulin signaling at the level of insulin receptor substrate (IRS) through activation of p38 gamma (MAPK12)-p62-mTORC1. Therefore, the UrdA enzyme from the gut bacteria L.fermentum strain NBRC 3956 may contribute to the pathogenesis of type 2 diabetes by producing the microbial metabolite dihydrourocanate. The sequence is that of Urocanate reductase from Limosilactobacillus fermentum (strain NBRC 3956 / LMG 18251) (Lactobacillus fermentum).